Here is a 410-residue protein sequence, read N- to C-terminus: Putative nickel insertion protein (410 aa).

Belongs to the LarC family.

The sequence is that of Putative nickel insertion protein from Cyanothece sp. (strain PCC 7425 / ATCC 29141).